The chain runs to 1723 residues: Lys-gingipain HG66 (1723 aa).

The N-terminal stretch at 1–24 (MRKLLLLIAASLLGVGLYAQNAKI) is a signal peptide. A propeptide spanning residues 25 to 228 (KLDAPTTRTT…ETAYKQLFNR (204 aa)) is cleaved from the precursor. Ca(2+) is bound by residues Asp313, Asp337, Asp339, Phe341, and Glu343. The active-site Proton donor is the His444. The active-site Nucleophile is the Cys477. 2 residues coordinate Ca(2+): Phe482 and Glu491. Positions 965–985 (DAPNGTPNPNPNPNPGTTTLS) are disordered. 11 residues coordinate Ca(2+): Ser987, Glu989, Asp1000, Asp1002, Asp1004, His1006, Ser1021, Gly1023, Asn1042, Asp1145, and Glu1146.

Belongs to the peptidase C25 family. Proteolytically cleaved into a catalytic subunit and three adhesins. Arg-gingipain is involved in this post-translational processing.

Its subcellular location is the secreted. The enzyme catalyses Endopeptidase with strict specificity for lysyl bonds.. Its function is as follows. Cysteine proteinase with a strong preference for substrates with Lys in the P1 position. Hydrolyzes bovine hemoglobin, bovine serum albumin, casein, human placental type I collagen and human IgA and IgG. Disrupts the functions of polymorphonuclear leukocytes. May act as a virulence factor in the development of peridontal disease. Involved in the coaggregation of P.gingivalis with other oral bacteria. The sequence is that of Lys-gingipain HG66 from Porphyromonas gingivalis (Bacteroides gingivalis).